Reading from the N-terminus, the 232-residue chain is MHIIKTVLIRHGESQWNKDNRFTGWIDVDLSNQGYSEAKRAGQLLKKYKFIFDYGYTSVLKRTIHTLWVILDQLNQTWLPIQKVWQLNERHYGALQGLNKNEAIKTYGYDTIQKWRRSFKDIPPKNNKNDLFLGTNDIRYKNIETNTLPNGESLELTANRVIPYWQKYIEPKIYNNNCIIIVAHGNSIRAILKFLNQLDDSEIFNIEIPTGIPLIYEFDNNIKPIRYYYLSE.

Residues 10–17, 23–24, Arg62, 89–92, Lys100, 116–117, and 185–186 contribute to the substrate site; these read RHGESQWN, TG, ERHY, RR, and GN. The Tele-phosphohistidine intermediate role is filled by His11. Glu89 serves as the catalytic Proton donor/acceptor.

Belongs to the phosphoglycerate mutase family. BPG-dependent PGAM subfamily. Homodimer.

The enzyme catalyses (2R)-2-phosphoglycerate = (2R)-3-phosphoglycerate. It participates in carbohydrate degradation; glycolysis; pyruvate from D-glyceraldehyde 3-phosphate: step 3/5. Its function is as follows. Catalyzes the interconversion of 2-phosphoglycerate and 3-phosphoglycerate. This Blochmanniella floridana protein is 2,3-bisphosphoglycerate-dependent phosphoglycerate mutase.